We begin with the raw amino-acid sequence, 473 residues long: High-affinity proline transporter PutP (473 aa).

Transmembrane regions (helical) follow at residues 32-52 (LSAG…GAMF), 56-76 (LSGA…WLYV), 114-134 (IVIL…GGVL), 146-166 (GLWI…FLAV), 171-191 (FVQG…TFFH), 218-238 (VLGI…PHII), 256-276 (IGMG…LGGI), 299-319 (ILFH…AIMS), 350-370 (LVFL…VLAW), 376-396 (ILGL…PVVL), 408-428 (GALA…NAGL), and 431-451 (FLYE…FVSI).

The protein belongs to the sodium:solute symporter (SSF) (TC 2.A.21) family.

Its subcellular location is the cell membrane. It carries out the reaction L-proline(in) + Na(+)(in) = L-proline(out) + Na(+)(out). In terms of biological role, catalyzes the high-affinity uptake of extracellular proline. Important for the use of proline as a sole carbon and energy source or a sole nitrogen source. The sequence is that of High-affinity proline transporter PutP from Bacillus subtilis (strain 168).